A 114-amino-acid polypeptide reads, in one-letter code: Progonadoliberin-2 (114 aa).

The signal sequence occupies residues 1 to 24 (MASSRRGLLLLLMLLTAHPGPSEA). Gly34 carries the glycine amide modification. The tract at residues 35–59 (GKRALSSAQDPQNALRPPAGSPAQA) is disordered.

It belongs to the GnRH family.

Its subcellular location is the secreted. Stimulates the secretion of gonadotropins; it stimulates the secretion of both luteinizing and follicle-stimulating hormones. This chain is Progonadoliberin-2 (GNRH2), found in Macaca mulatta (Rhesus macaque).